Consider the following 440-residue polypeptide: Alpha-methylserine aldolase (440 aa).

Residue Lys255 is modified to N6-(pyridoxal phosphate)lysine.

Belongs to the SHMT family. Alpha-methylserine aldolase subfamily. Homodimer. The cofactor is pyridoxal 5'-phosphate.

It catalyses the reaction 2-methyl-L-serine = formaldehyde + L-alanine. The enzyme catalyses 2-ethyl-L-serine = (2S)-2-aminobutanoate + formaldehyde. Its activity is regulated as follows. In the alpha-methyl-L-serine synthesis reaction, activity is inhibited by an excess amount of formaldehyde (at a concentration greater than 4 mM). Formaldehyde release activity is reduced by the sulfhydryl reagent N-ethylmaleimide, iodoacetate amide and iodoacetic acid, but not by dithiothreitol and 2-mercaptoethanol. Activity is enhanced by 1 mM of manganese chloride. Catalyzes the reversible interconversion of alpha-methyl-L-serine to L-alanine and formaldehyde. Can also catalyze the synthesis of alpha-ethyl-L-serine from L-2-aminobutyric acid and formaldehyde. Also shows low alanine racemase activity. Cannot use alpha-methyl-D-serine, L-serine, D-serine, (S)-2-amino-1-propanol, (R)-2-amino-1-propanol, (S)-alpha-hydroxymethyltyrosine, (R)-alpha-hydroxymethyltyrosine, alpha-iso-butyl-DL-serine, alpha-iso-propyl-DL-serine or alpha-benzyl-DL-serine. Cannot use D-alanine instead of L-alanine as the substrate for alpha-methyl-L-serine synthesis. Does not require tetrahydrofolate (THF) for activity. The sequence is that of Alpha-methylserine aldolase from Variovorax paradoxus.